We begin with the raw amino-acid sequence, 349 residues long: Cobalt-precorrin-5B C(1)-methyltransferase (349 aa).

The protein belongs to the CbiD family.

It carries out the reaction Co-precorrin-5B + S-adenosyl-L-methionine = Co-precorrin-6A + S-adenosyl-L-homocysteine. Its pathway is cofactor biosynthesis; adenosylcobalamin biosynthesis; cob(II)yrinate a,c-diamide from sirohydrochlorin (anaerobic route): step 6/10. In terms of biological role, catalyzes the methylation of C-1 in cobalt-precorrin-5B to form cobalt-precorrin-6A. The protein is Cobalt-precorrin-5B C(1)-methyltransferase of Saccharolobus solfataricus (strain ATCC 35092 / DSM 1617 / JCM 11322 / P2) (Sulfolobus solfataricus).